Here is a 295-residue protein sequence, read N- to C-terminus: Putative NADH-ubiquinone oxidoreductase MJ0520 (295 aa).

The next 8 helical transmembrane spans lie at 8–28 (LIGA…LLGL), 69–89 (LYIF…IIAI), 129–149 (VFSA…YLTT), 163–183 (IHGS…ILLV), 199–219 (IVSG…YIAE), 220–240 (AIAY…PLVI), 243–263 (PVLT…VNGL), and 273–293 (VMLQ…RLIV).

This sequence belongs to the complex I subunit 1 family.

The protein localises to the cell membrane. The enzyme catalyses a ubiquinone + NADH + 5 H(+)(in) = a ubiquinol + NAD(+) + 4 H(+)(out). The protein is Putative NADH-ubiquinone oxidoreductase MJ0520 of Methanocaldococcus jannaschii (strain ATCC 43067 / DSM 2661 / JAL-1 / JCM 10045 / NBRC 100440) (Methanococcus jannaschii).